The sequence spans 314 residues: Bifunctional pinoresinol-lariciresinol reductase (314 aa).

NADP(+)-binding positions include glycine 10–glycine 16, arginine 35, and lysine 44. Residue lysine 138 is the Proton acceptor of the active site. An NADP(+)-binding site is contributed by arginine 142. Histidine 270 contacts substrate.

The protein belongs to the NmrA-type oxidoreductase family. Isoflavone reductase subfamily. Dimer.

It catalyses the reaction (+)-lariciresinol + NADP(+) = (+)-pinoresinol + NADPH + H(+). It carries out the reaction (+)-secoisolariciresinol + NADP(+) = (-)-lariciresinol + NADPH + H(+). Its function is as follows. Reductase involved in the lignan justicidin B biosynthesis. Catalyzes the enantioselective conversion of (+)-pinoresinol into (+)-lariciresinol and of (-)-lariciresinol into (+)-secoisolariciresinol. Low activity with the other enantiomers. Abstracts the 4R-hydride from the NADPH cofactor during catalysis. This Linum perenne (Perennial flax) protein is Bifunctional pinoresinol-lariciresinol reductase (PLR_Lp1).